The sequence spans 100 residues: Urease subunit gamma (100 aa).

This sequence belongs to the urease gamma subunit family. As to quaternary structure, heterotrimer of UreA (gamma), UreB (beta) and UreC (alpha) subunits. Three heterotrimers associate to form the active enzyme.

It localises to the cytoplasm. It carries out the reaction urea + 2 H2O + H(+) = hydrogencarbonate + 2 NH4(+). The protein operates within nitrogen metabolism; urea degradation; CO(2) and NH(3) from urea (urease route): step 1/1. This is Urease subunit gamma from Proteus hauseri.